Reading from the N-terminus, the 399-residue chain is MLDNKTIEIIKSTVPVLQQHGETITGRFYDRMFQDHPELLNIFNQTNQKKKTQRTALANAVIAAAANIDQLGNIIPVVKQIGHKHRSIGIKPEHYPIVGKYLLIAIKDVLGDAATPDIMQAWEKAYGVIADAFIGIEKDMYEQAEEQAGGWKEYKPFVIAKKERESKEITSFYLKPEDSKPLPEFQAGQYISIKVRIPDSEYTHIRQYSLSDMPGKDYYRISVKKDGVVSSYLHDGLQEGDSIEISAPAGDFVLDHASQKDLVLISAGVGITPMISMLKTSVSKQPERQILFIHAAKNSEYHALRHEVEEAAKHSAVKTAFVYREPTEEDRAGDLHFHEGQIDQQFLKELIANTDADYYICGSPSFITAMHKLVSELGSAPESIHYELFGPQLSLAQSV.

Residues 1 to 138 (MLDNKTIEII…IADAFIGIEK (138 aa)) form the Globin domain. Position 85 (His-85) interacts with heme b. Active-site charge relay system residues include Tyr-95 and Glu-137. Positions 149–399 (GGWKEYKPFV…GPQLSLAQSV (251 aa)) are reductase. Residues 152 to 255 (KEYKPFVIAK…SAPAGDFVLD (104 aa)) form the FAD-binding FR-type domain. FAD is bound by residues Tyr-190 and 206–209 (RQYS). Residue 268 to 273 (GVGITP) coordinates NADP(+). 388-391 (LFGP) lines the FAD pocket.

Belongs to the globin family. Two-domain flavohemoproteins subfamily. This sequence in the C-terminal section; belongs to the flavoprotein pyridine nucleotide cytochrome reductase family. The cofactor is heme b. FAD serves as cofactor.

It carries out the reaction 2 nitric oxide + NADPH + 2 O2 = 2 nitrate + NADP(+) + H(+). It catalyses the reaction 2 nitric oxide + NADH + 2 O2 = 2 nitrate + NAD(+) + H(+). Its function is as follows. Is involved in NO detoxification in an aerobic process, termed nitric oxide dioxygenase (NOD) reaction that utilizes O(2) and NAD(P)H to convert NO to nitrate, which protects the bacterium from various noxious nitrogen compounds. Therefore, plays a central role in the inducible response to nitrosative stress. In Bacillus subtilis (strain 168), this protein is Flavohemoprotein (hmp).